A 257-amino-acid chain; its full sequence is Transmembrane protein 101 (257 aa).

A run of 8 helical transmembrane segments spans residues 21–40 (VLLT…LYAE), 52–72 (VPYL…MSFG), 77–97 (WFAL…YIGG), 110–130 (YSRT…AGEL), 139–159 (SLQS…AYSL), 182–202 (LFFV…YVTL), 206–226 (ILAV…AYWH), and 233–253 (FWNQ…AVIL).

It localises to the membrane. Functionally, may activate NF-kappa-B signaling pathways. The polypeptide is Transmembrane protein 101 (TMEM101) (Pongo abelii (Sumatran orangutan)).